A 286-amino-acid chain; its full sequence is MQIIVPASSANLGPGFDSIGVALSLLLTVDVLGPATSWQVDHQLADLPHDESNLIVQTARQLVPDLTPHHLAVQSDIPVAHGLGSSSSAIVAGIELANQLGALHLSNEQKVAFACQLEGHPDNVAPTILGGLVIGTEVNGGFAAVKAPLPPYLFAAYIPAYNVKTKEARAALPTTLPFKEAVAASATANTLVAALFTGDYQLVGQLIEQDRFHEQARAHLVPELTQLRELGHRCGALATYLSGAGPTVMTLLKEADFPAFQAAITQAGLPGRLVPLTPHPTGVTVS.

An ATP-binding site is contributed by 78 to 88; that stretch reads PVAHGLGSSSS.

The protein belongs to the GHMP kinase family. Homoserine kinase subfamily.

The protein localises to the cytoplasm. It catalyses the reaction L-homoserine + ATP = O-phospho-L-homoserine + ADP + H(+). It functions in the pathway amino-acid biosynthesis; L-threonine biosynthesis; L-threonine from L-aspartate: step 4/5. In terms of biological role, catalyzes the ATP-dependent phosphorylation of L-homoserine to L-homoserine phosphate. The sequence is that of Homoserine kinase from Limosilactobacillus fermentum (strain NBRC 3956 / LMG 18251) (Lactobacillus fermentum).